Reading from the N-terminus, the 161-residue chain is Ferric uptake regulation protein 1 (161 aa).

Zn(2+) is bound by residues cysteine 94 and cysteine 97.

This sequence belongs to the Fur family.

It is found in the cytoplasm. Acts as a global negative controlling element, employing Fe(2+) as a cofactor to bind the operator of the repressed genes. The sequence is that of Ferric uptake regulation protein 1 (fur1) from Mycolicibacterium fortuitum (Mycobacterium fortuitum).